The primary structure comprises 574 residues: Phosphoenolpyruvate-protein phosphotransferase (574 aa).

The active-site Tele-phosphohistidine intermediate is the His190. Phosphoenolpyruvate contacts are provided by Arg297 and Arg333. Residues Glu432 and Asp456 each contribute to the Mg(2+) site. Residues 455-456 (ND) and Arg466 each bind phosphoenolpyruvate. The active-site Proton donor is the Cys503.

It belongs to the PEP-utilizing enzyme family. In terms of assembly, homodimer. Requires Mg(2+) as cofactor.

The protein resides in the cytoplasm. It carries out the reaction L-histidyl-[protein] + phosphoenolpyruvate = N(pros)-phospho-L-histidyl-[protein] + pyruvate. Functionally, general (non sugar-specific) component of the phosphoenolpyruvate-dependent sugar phosphotransferase system (sugar PTS). This major carbohydrate active-transport system catalyzes the phosphorylation of incoming sugar substrates concomitantly with their translocation across the cell membrane. Enzyme I transfers the phosphoryl group from phosphoenolpyruvate (PEP) to the phosphoryl carrier protein (HPr). In Latilactobacillus sakei (Lactobacillus sakei), this protein is Phosphoenolpyruvate-protein phosphotransferase (ptsI).